We begin with the raw amino-acid sequence, 189 residues long: EIGFTRTLHGVMQNITHLCSRSKSRTWGKDGWKKIVVCIIADGRKKVHPRTLNALAALGVYQEGIAKNVVNQKQVNAHVYEYTTQVSLDPDLKFKGAEKGIMPCQVLFCLKEHNKKKLNSHRWFFNAFGRALQPNICILLDVGTKPAPTALYHLWKAFDQNSNVAGAAGEIKAGKGKGMLGLLNPLVAS.

Belongs to the chitin synthase family. Class II subfamily.

It localises to the cell membrane. The catalysed reaction is [(1-&gt;4)-N-acetyl-beta-D-glucosaminyl](n) + UDP-N-acetyl-alpha-D-glucosamine = [(1-&gt;4)-N-acetyl-beta-D-glucosaminyl](n+1) + UDP + H(+). In terms of biological role, polymerizes chitin, a structural polymer of the cell wall and septum, by transferring the sugar moiety of UDP-GlcNAc to the non-reducing end of the growing chitin polymer. The protein is Chitin synthase 2 (chs2) of Aspergillus niger.